The following is a 121-amino-acid chain: Small ribosomal subunit protein bS16 (121 aa).

A disordered region spans residues 80 to 121; it reads AGVREKTERNNPNKAKPGKKAQERAEEKAAKAAEAAEAADAE. 2 stretches are compositionally biased toward basic and acidic residues: residues 81-90 and 99-110; these read GVREKTERNN and KAQERAEEKAAK.

It belongs to the bacterial ribosomal protein bS16 family.

This Ruegeria sp. (strain TM1040) (Silicibacter sp.) protein is Small ribosomal subunit protein bS16.